The following is a 99-amino-acid chain: Malonate decarboxylase acyl carrier protein (99 aa).

Serine 25 is subject to O-(phosphoribosyl dephospho-coenzyme A)serine.

It belongs to the MdcC family. In terms of processing, covalently binds the prosthetic group of malonate decarboxylase.

It is found in the cytoplasm. Functionally, subunit of malonate decarboxylase, it is an acyl carrier protein to which acetyl and malonyl thioester residues are bound via a 2'-(5''-phosphoribosyl)-3'-dephospho-CoA prosthetic group and turn over during the catalytic mechanism. This is Malonate decarboxylase acyl carrier protein from Stutzerimonas stutzeri (strain A1501) (Pseudomonas stutzeri).